We begin with the raw amino-acid sequence, 597 residues long: DNA mismatch repair protein MutL (597 aa).

This sequence belongs to the DNA mismatch repair MutL/HexB family.

This protein is involved in the repair of mismatches in DNA. It is required for dam-dependent methyl-directed DNA mismatch repair. May act as a 'molecular matchmaker', a protein that promotes the formation of a stable complex between two or more DNA-binding proteins in an ATP-dependent manner without itself being part of a final effector complex. This is DNA mismatch repair protein MutL from Rhodopseudomonas palustris (strain HaA2).